Here is a 78-residue protein sequence, read N- to C-terminus: Large ribosomal subunit protein bL28 (78 aa).

Belongs to the bacterial ribosomal protein bL28 family.

This Bordetella avium (strain 197N) protein is Large ribosomal subunit protein bL28.